A 73-amino-acid chain; its full sequence is Sec-independent protein translocase protein TatA (73 aa).

The chain crosses the membrane as a helical span at residues 1–21; it reads MGSFSIWHWVIVLVVVVLIFG. The disordered stretch occupies residues 43-73; it reads MKSEGEDAAQTPPAAQKEGGRVIDAEPADKK. Residues 60 to 73 are compositionally biased toward basic and acidic residues; it reads EGGRVIDAEPADKK.

This sequence belongs to the TatA/E family. As to quaternary structure, the Tat system comprises two distinct complexes: a TatABC complex, containing multiple copies of TatA, TatB and TatC subunits, and a separate TatA complex, containing only TatA subunits. Substrates initially bind to the TatABC complex, which probably triggers association of the separate TatA complex to form the active translocon.

It is found in the cell inner membrane. Its function is as follows. Part of the twin-arginine translocation (Tat) system that transports large folded proteins containing a characteristic twin-arginine motif in their signal peptide across membranes. TatA could form the protein-conducting channel of the Tat system. The sequence is that of Sec-independent protein translocase protein TatA from Laribacter hongkongensis (strain HLHK9).